The sequence spans 298 residues: Nitrogenase iron protein (298 aa).

13 to 20 (GKGGIGKS) serves as a coordination point for ATP. Cys-101 is a binding site for [4Fe-4S] cluster. Arg-104 bears the ADP-ribosylarginine; by dinitrogenase reductase ADP-ribosyltransferase mark. A [4Fe-4S] cluster-binding site is contributed by Cys-135.

The protein belongs to the NifH/BchL/ChlL family. Homodimer. [4Fe-4S] cluster is required as a cofactor. The reversible ADP-ribosylation of Arg-104 inactivates the nitrogenase reductase and regulates nitrogenase activity.

The catalysed reaction is N2 + 8 reduced [2Fe-2S]-[ferredoxin] + 16 ATP + 16 H2O = H2 + 8 oxidized [2Fe-2S]-[ferredoxin] + 2 NH4(+) + 16 ADP + 16 phosphate + 6 H(+). The key enzymatic reactions in nitrogen fixation are catalyzed by the nitrogenase complex, which has 2 components: the iron protein and the molybdenum-iron protein. This is Nitrogenase iron protein from Cyanothece sp. (strain PCC 7425 / ATCC 29141).